The chain runs to 131 residues: Bypass of stop codon protein 4 (131 aa).

The chain is Bypass of stop codon protein 4 (BSC4) from Saccharomyces cerevisiae (strain ATCC 204508 / S288c) (Baker's yeast).